The chain runs to 289 residues: D-alanine aminotransferase (289 aa).

Y31 contributes to the substrate binding site. R50 contacts pyridoxal 5'-phosphate. 2 residues coordinate substrate: R99 and H101. The active-site Proton acceptor is K147. An N6-(pyridoxal phosphate)lysine modification is found at K147. E179 serves as a coordination point for pyridoxal 5'-phosphate.

The protein belongs to the class-IV pyridoxal-phosphate-dependent aminotransferase family. As to quaternary structure, homodimer. Pyridoxal 5'-phosphate is required as a cofactor.

The catalysed reaction is D-alanine + 2-oxoglutarate = D-glutamate + pyruvate. Acts on the D-isomers of alanine, leucine, aspartate, glutamate, aminobutyrate, norvaline and asparagine. The enzyme transfers an amino group from a substrate D-amino acid to the pyridoxal phosphate cofactor to form pyridoxamine and an alpha-keto acid in the first half-reaction. The second half-reaction is the reverse of the first, transferring the amino group from the pyridoxamine to a second alpha-keto acid to form the product D-amino acid via a ping-pong mechanism. This is an important process in the formation of D-alanine and D-glutamate, which are essential bacterial cell wall components. This Listeria innocua serovar 6a (strain ATCC BAA-680 / CLIP 11262) protein is D-alanine aminotransferase (dat).